We begin with the raw amino-acid sequence, 142 residues long: Small ribosomal subunit protein bS6 (142 aa).

Residues 113-136 (IKKEPREPREPRAPREPKAEKIEE) are compositionally biased toward basic and acidic residues. The segment at 113 to 142 (IKKEPREPREPRAPREPKAEKIEEQTFSEE) is disordered.

Belongs to the bacterial ribosomal protein bS6 family.

Functionally, binds together with bS18 to 16S ribosomal RNA. This Campylobacter curvus (strain 525.92) protein is Small ribosomal subunit protein bS6.